The chain runs to 60 residues: Cecropin-B (60 aa).

The first 25 residues, 1–25 (MNFTKLFILVAIAVLVVVGVQPVDG), serve as a signal peptide directing secretion. L59 carries the post-translational modification Leucine amide.

It belongs to the cecropin family.

It is found in the secreted. Functionally, cecropins have lytic and antibacterial activity against several Gram-positive and Gram-negative bacteria. This chain is Cecropin-B (CecB), found in Anopheles gambiae (African malaria mosquito).